Reading from the N-terminus, the 346-residue chain is uncharacterized protein (346 aa).

The chain crosses the membrane as a helical span at residues 16-36; sequence ILGIIICIILIVGFFISFDST.

Its subcellular location is the membrane. This is an uncharacterized protein from Methanocaldococcus jannaschii (strain ATCC 43067 / DSM 2661 / JAL-1 / JCM 10045 / NBRC 100440) (Methanococcus jannaschii).